The primary structure comprises 249 residues: Large ribosomal subunit protein uL30A (249 aa).

It belongs to the universal ribosomal protein uL30 family. In terms of assembly, component of the small ribosomal subunit (SSU). Mature yeast ribosomes consist of a small (40S) and a large (60S) subunit. The 40S small subunit contains 1 molecule of ribosomal RNA (18S rRNA) and at least 33 different proteins. The large 60S subunit contains 3 rRNA molecules (25S, 5.8S and 5S rRNA) and at least 46 different proteins.

The protein localises to the cytoplasm. It localises to the nucleus. It is found in the nucleolus. Component of the ribosome, a large ribonucleoprotein complex responsible for the synthesis of proteins in the cell. The small ribosomal subunit (SSU) binds messenger RNAs (mRNAs) and translates the encoded message by selecting cognate aminoacyl-transfer RNA (tRNA) molecules. The large subunit (LSU) contains the ribosomal catalytic site termed the peptidyl transferase center (PTC), which catalyzes the formation of peptide bonds, thereby polymerizing the amino acids delivered by tRNAs into a polypeptide chain. The nascent polypeptides leave the ribosome through a tunnel in the LSU and interact with protein factors that function in enzymatic processing, targeting, and the membrane insertion of nascent chains at the exit of the ribosomal tunnel. The polypeptide is Large ribosomal subunit protein uL30A (rlp7) (Schizosaccharomyces pombe (strain 972 / ATCC 24843) (Fission yeast)).